Reading from the N-terminus, the 57-residue chain is UPF0434 protein swp_2279 (57 aa).

It belongs to the UPF0434 family.

The polypeptide is UPF0434 protein swp_2279 (Shewanella piezotolerans (strain WP3 / JCM 13877)).